A 171-amino-acid chain; its full sequence is 6,7-dimethyl-8-ribityllumazine synthase (171 aa).

Residues phenylalanine 24, 58 to 60 (ALE), and 82 to 84 (AVI) each bind 5-amino-6-(D-ribitylamino)uracil. (2S)-2-hydroxy-3-oxobutyl phosphate is bound at residue 87-88 (ET). Catalysis depends on histidine 90, which acts as the Proton donor. Residue asparagine 115 participates in 5-amino-6-(D-ribitylamino)uracil binding. Arginine 129 contacts (2S)-2-hydroxy-3-oxobutyl phosphate. Residues 150–171 (ALDQLGDDEDEEEDEDDEEERA) form a disordered region. A compositionally biased stretch (acidic residues) spans 154-171 (LGDDEDEEEDEDDEEERA).

Belongs to the DMRL synthase family.

It carries out the reaction (2S)-2-hydroxy-3-oxobutyl phosphate + 5-amino-6-(D-ribitylamino)uracil = 6,7-dimethyl-8-(1-D-ribityl)lumazine + phosphate + 2 H2O + H(+). Its pathway is cofactor biosynthesis; riboflavin biosynthesis; riboflavin from 2-hydroxy-3-oxobutyl phosphate and 5-amino-6-(D-ribitylamino)uracil: step 1/2. Catalyzes the formation of 6,7-dimethyl-8-ribityllumazine by condensation of 5-amino-6-(D-ribitylamino)uracil with 3,4-dihydroxy-2-butanone 4-phosphate. This is the penultimate step in the biosynthesis of riboflavin. In Burkholderia cenocepacia (strain HI2424), this protein is 6,7-dimethyl-8-ribityllumazine synthase.